Consider the following 501-residue polypeptide: uncharacterized protein (501 aa).

7 helical membrane passes run 14 to 34 (AIFIIPFWILSIALWFSSGSV), 73 to 93 (FILFQIIPINILCFLPLLGYM), 111 to 131 (IFGIMMLITIPLFLIVSICIF), 197 to 217 (FIIATIVFSFSMLVIVLVLLI), 274 to 294 (ILLSIFQLFYIGSYFSLYYFG), 297 to 317 (FNLIPFFINLIILFISYYNLI), and 466 to 486 (FLVLIGLSGLFNILYLKRLIL).

It is found in the membrane. This is an uncharacterized protein from Dictyostelium discoideum (Social amoeba).